Consider the following 427-residue polypeptide: Arginine biosynthesis bifunctional protein ArgJ (427 aa).

Residues Thr174, Lys200, Thr211, Glu291, Asn422, and Thr427 each contribute to the substrate site. Catalysis depends on Thr211, which acts as the Nucleophile.

Belongs to the ArgJ family. Heterotetramer of two alpha and two beta chains.

The protein resides in the cytoplasm. It catalyses the reaction N(2)-acetyl-L-ornithine + L-glutamate = N-acetyl-L-glutamate + L-ornithine. The enzyme catalyses L-glutamate + acetyl-CoA = N-acetyl-L-glutamate + CoA + H(+). Its pathway is amino-acid biosynthesis; L-arginine biosynthesis; L-ornithine and N-acetyl-L-glutamate from L-glutamate and N(2)-acetyl-L-ornithine (cyclic): step 1/1. It functions in the pathway amino-acid biosynthesis; L-arginine biosynthesis; N(2)-acetyl-L-ornithine from L-glutamate: step 1/4. Catalyzes two activities which are involved in the cyclic version of arginine biosynthesis: the synthesis of N-acetylglutamate from glutamate and acetyl-CoA as the acetyl donor, and of ornithine by transacetylation between N(2)-acetylornithine and glutamate. This Prochlorococcus marinus (strain MIT 9313) protein is Arginine biosynthesis bifunctional protein ArgJ.